The following is a 105-amino-acid chain: Small ribosomal subunit protein uS10c (105 aa).

Belongs to the universal ribosomal protein uS10 family. As to quaternary structure, part of the 30S ribosomal subunit.

The protein resides in the plastid. The protein localises to the chloroplast. Its function is as follows. Involved in the binding of tRNA to the ribosomes. The protein is Small ribosomal subunit protein uS10c of Porphyra purpurea (Red seaweed).